The primary structure comprises 492 residues: MSNFQFAIPTIDYIRILPEIVLAVFGIVVMMADALIPQNNSKKPLGYLSLIGVLVSLGAIACQARYPGMYDVNNGTGFWGMVHVDSFSLFFHVLIALITAAVLLVSFEYMDVQRMRSGEYYAIILFSALGMMLMTSATELVLIFIALEISSIGSYVLAAMRRRVAESAESSLKYFLLGSFATAFFLYGVALIFGATGSTNVYTIAAALQNMHPLQPIIYLAVALMFIGLGFKVAAAPFHVWTPDVYEGAPSPIVALMSTGPKAAAFAVLLRVLFAMNAPGWFWIVWVSAALSMTIGNIGALVQSNVKRLLAYSSIAHAGYMLVAFAAAKDAGISAAIFYTATYAAMNVGAFAVVSHFANTGEKYVTLEDYAGLGRRSPLLAAILTVFLLSLIGIPVTGGFFAKFYVFTSALQSHLVWLTIIGVINSAVGAYYYLRIIVYMYMRDEREEVPVARMPFGLALALAMCLMFTIYLGVLPTQFINYALKSAQDLVR.

14 consecutive transmembrane segments (helical) span residues 16 to 36 (ILPE…DALI), 44 to 64 (PLGY…ACQA), 87 to 107 (FSLF…LVSF), 118 to 138 (GEYY…TSAT), 140 to 160 (LVLI…LAAM), 175 to 195 (FLLG…IFGA), 216 to 236 (PIIY…VAAA), 250 to 270 (PSPI…AVLL), 282 to 302 (FWIV…GALV), 309 to 329 (LLAY…AAAK), 333 to 353 (ISAA…AFAV), 381 to 401 (AAIL…GGFF), 416 to 438 (VWLT…RIIV), and 455 to 475 (PFGL…LGVL).

It belongs to the complex I subunit 2 family. NDH-1 is composed of 14 different subunits. Subunits NuoA, H, J, K, L, M, N constitute the membrane sector of the complex.

It is found in the cell inner membrane. It catalyses the reaction a quinone + NADH + 5 H(+)(in) = a quinol + NAD(+) + 4 H(+)(out). Functionally, NDH-1 shuttles electrons from NADH, via FMN and iron-sulfur (Fe-S) centers, to quinones in the respiratory chain. The immediate electron acceptor for the enzyme in this species is believed to be ubiquinone. Couples the redox reaction to proton translocation (for every two electrons transferred, four hydrogen ions are translocated across the cytoplasmic membrane), and thus conserves the redox energy in a proton gradient. This is NADH-quinone oxidoreductase subunit N 2 from Koribacter versatilis (strain Ellin345).